The chain runs to 133 residues: uncharacterized protein (133 aa).

This is an uncharacterized protein from Enterobacteria phage T4 (Bacteriophage T4).